Consider the following 189-residue polypeptide: MATYSASDFRSGLKVMLDGDPCAIVENELVKPGKGQAFARVRLRNLKTGRVWERTFKSGETLEGADVMDRDMEYLYTDGEFWHFMEPDSFEQYQADANAVGDSAKWLREQDKVIVTLFNGSPLAITPPNHVELEIVETDPGLKGDTAQGGTKPATLTTGAVVKVPLFISTGEVVRVDTRTGEYLGRASK.

Lys-34 bears the N6-(3,6-diaminohexanoyl)-5-hydroxylysine mark.

Belongs to the elongation factor P family. In terms of processing, may be beta-lysylated on the epsilon-amino group of Lys-34 by the combined action of EpmA and EpmB, and then hydroxylated on the C5 position of the same residue by EpmC (if this protein is present). Lysylation is critical for the stimulatory effect of EF-P on peptide-bond formation. The lysylation moiety may extend toward the peptidyltransferase center and stabilize the terminal 3-CCA end of the tRNA. Hydroxylation of the C5 position on Lys-34 may allow additional potential stabilizing hydrogen-bond interactions with the P-tRNA.

Its subcellular location is the cytoplasm. Its pathway is protein biosynthesis; polypeptide chain elongation. Functionally, involved in peptide bond synthesis. Alleviates ribosome stalling that occurs when 3 or more consecutive Pro residues or the sequence PPG is present in a protein, possibly by augmenting the peptidyl transferase activity of the ribosome. Modification of Lys-34 is required for alleviation. This Saccharophagus degradans (strain 2-40 / ATCC 43961 / DSM 17024) protein is Elongation factor P.